A 203-amino-acid chain; its full sequence is Holliday junction branch migration complex subunit RuvA (203 aa).

Positions 1 to 63 (MYEYLKGLVT…DTDITLFGFY (63 aa)) are domain I. Positions 64-142 (DLDEKQLFQK…DLEQSATLVG (79 aa)) are domain II. A flexible linker region spans residues 143–153 (QTAIDLGSQGD). The domain III stretch occupies residues 153–203 (DSPELSDALAALSALGYSAREVKAITPKLTDFAAQTTDQYLREGLRLLMKK).

Belongs to the RuvA family. In terms of assembly, homotetramer. Forms an RuvA(8)-RuvB(12)-Holliday junction (HJ) complex. HJ DNA is sandwiched between 2 RuvA tetramers; dsDNA enters through RuvA and exits via RuvB. An RuvB hexamer assembles on each DNA strand where it exits the tetramer. Each RuvB hexamer is contacted by two RuvA subunits (via domain III) on 2 adjacent RuvB subunits; this complex drives branch migration. In the full resolvosome a probable DNA-RuvA(4)-RuvB(12)-RuvC(2) complex forms which resolves the HJ.

Its subcellular location is the cytoplasm. The RuvA-RuvB-RuvC complex processes Holliday junction (HJ) DNA during genetic recombination and DNA repair, while the RuvA-RuvB complex plays an important role in the rescue of blocked DNA replication forks via replication fork reversal (RFR). RuvA specifically binds to HJ cruciform DNA, conferring on it an open structure. The RuvB hexamer acts as an ATP-dependent pump, pulling dsDNA into and through the RuvAB complex. HJ branch migration allows RuvC to scan DNA until it finds its consensus sequence, where it cleaves and resolves the cruciform DNA. This is Holliday junction branch migration complex subunit RuvA from Latilactobacillus sakei subsp. sakei (strain 23K) (Lactobacillus sakei subsp. sakei).